The following is a 581-amino-acid chain: Aspartate--tRNA ligase (581 aa).

L-aspartate is bound at residue Glu-170. Positions 194–197 (QLFK) are aspartate. L-aspartate is bound at residue Arg-216. ATP is bound by residues 216 to 218 (RDE) and Gln-225. Position 439 (His-439) interacts with L-aspartate. Residue Glu-468 participates in ATP binding. Position 475 (Arg-475) interacts with L-aspartate. 520–523 (GFDR) contributes to the ATP binding site.

This sequence belongs to the class-II aminoacyl-tRNA synthetase family. Type 1 subfamily. In terms of assembly, homodimer.

The protein resides in the cytoplasm. It catalyses the reaction tRNA(Asp) + L-aspartate + ATP = L-aspartyl-tRNA(Asp) + AMP + diphosphate. Catalyzes the attachment of L-aspartate to tRNA(Asp) in a two-step reaction: L-aspartate is first activated by ATP to form Asp-AMP and then transferred to the acceptor end of tRNA(Asp). This chain is Aspartate--tRNA ligase, found in Thermosipho melanesiensis (strain DSM 12029 / CIP 104789 / BI429).